The chain runs to 78 residues: SVHHQDSSDEPSESSHPCCDLCLCTKSIPPQCQCADIRLDSCHSACKSCMCTRSMPGQCRCLDTHDFCHKPCKSRDKD.

7 cysteine pairs are disulfide-bonded: Cys18–Cys72, Cys19–Cys34, Cys22–Cys68, Cys24–Cys32, Cys42–Cys49, Cys46–Cys61, and Cys51–Cys59.

It belongs to the Bowman-Birk serine protease inhibitor family.

Its function is as follows. These inhibitors strongly inhibit trypsin. In Phaseolus angularis (Azuki bean), this protein is Bowman-Birk type proteinase inhibitors I-A, I-B, and I-A'.